Reading from the N-terminus, the 99-residue chain is Aspartyl/glutamyl-tRNA(Asn/Gln) amidotransferase subunit C (99 aa).

It belongs to the GatC family. In terms of assembly, heterotrimer of A, B and C subunits.

The enzyme catalyses L-glutamyl-tRNA(Gln) + L-glutamine + ATP + H2O = L-glutaminyl-tRNA(Gln) + L-glutamate + ADP + phosphate + H(+). The catalysed reaction is L-aspartyl-tRNA(Asn) + L-glutamine + ATP + H2O = L-asparaginyl-tRNA(Asn) + L-glutamate + ADP + phosphate + 2 H(+). In terms of biological role, allows the formation of correctly charged Asn-tRNA(Asn) or Gln-tRNA(Gln) through the transamidation of misacylated Asp-tRNA(Asn) or Glu-tRNA(Gln) in organisms which lack either or both of asparaginyl-tRNA or glutaminyl-tRNA synthetases. The reaction takes place in the presence of glutamine and ATP through an activated phospho-Asp-tRNA(Asn) or phospho-Glu-tRNA(Gln). The protein is Aspartyl/glutamyl-tRNA(Asn/Gln) amidotransferase subunit C of Burkholderia mallei (strain NCTC 10247).